Reading from the N-terminus, the 333-residue chain is Holliday junction branch migration complex subunit RuvB (333 aa).

The segment at 1–182 (MDERLLSGES…FGVLSRLEYY (182 aa)) is large ATPase domain (RuvB-L). ATP is bound by residues L21, R22, G63, K66, T67, T68, 129 to 131 (EDF), R172, Y182, and R219. Residue T67 participates in Mg(2+) binding. A small ATPAse domain (RuvB-S) region spans residues 183–253 (TVDQLSAIVE…ITQMALELLQ (71 aa)). The segment at 256-333 (KLGLDHIDHK…EHFGMEIPKV (78 aa)) is head domain (RuvB-H). DNA is bound by residues R311 and R316.

This sequence belongs to the RuvB family. As to quaternary structure, homohexamer. Forms an RuvA(8)-RuvB(12)-Holliday junction (HJ) complex. HJ DNA is sandwiched between 2 RuvA tetramers; dsDNA enters through RuvA and exits via RuvB. An RuvB hexamer assembles on each DNA strand where it exits the tetramer. Each RuvB hexamer is contacted by two RuvA subunits (via domain III) on 2 adjacent RuvB subunits; this complex drives branch migration. In the full resolvosome a probable DNA-RuvA(4)-RuvB(12)-RuvC(2) complex forms which resolves the HJ.

Its subcellular location is the cytoplasm. The catalysed reaction is ATP + H2O = ADP + phosphate + H(+). The RuvA-RuvB-RuvC complex processes Holliday junction (HJ) DNA during genetic recombination and DNA repair, while the RuvA-RuvB complex plays an important role in the rescue of blocked DNA replication forks via replication fork reversal (RFR). RuvA specifically binds to HJ cruciform DNA, conferring on it an open structure. The RuvB hexamer acts as an ATP-dependent pump, pulling dsDNA into and through the RuvAB complex. RuvB forms 2 homohexamers on either side of HJ DNA bound by 1 or 2 RuvA tetramers; 4 subunits per hexamer contact DNA at a time. Coordinated motions by a converter formed by DNA-disengaged RuvB subunits stimulates ATP hydrolysis and nucleotide exchange. Immobilization of the converter enables RuvB to convert the ATP-contained energy into a lever motion, pulling 2 nucleotides of DNA out of the RuvA tetramer per ATP hydrolyzed, thus driving DNA branch migration. The RuvB motors rotate together with the DNA substrate, which together with the progressing nucleotide cycle form the mechanistic basis for DNA recombination by continuous HJ branch migration. Branch migration allows RuvC to scan DNA until it finds its consensus sequence, where it cleaves and resolves cruciform DNA. The protein is Holliday junction branch migration complex subunit RuvB of Bacillus cereus (strain B4264).